A 1089-amino-acid polypeptide reads, in one-letter code: Probable transport protein MmpL8 (1089 aa).

The segment at Met-1–Thr-26 is disordered. The next 12 membrane-spanning stretches (helical) occupy residues Trp-44–Leu-64, Ile-222–Leu-242, Leu-257–Ser-277, Ile-316–Phe-336, Leu-349–Val-369, Lys-400–Ala-420, Ala-555–Gly-575, Ile-874–Val-894, Tyr-898–Phe-918, Ile-930–Ile-950, Gly-973–Ala-993, and Gly-996–Val-1016. The interval Arg-1056–Leu-1078 is disordered. The segment covering Glu-1066–Leu-1078 has biased composition (acidic residues).

It belongs to the resistance-nodulation-cell division (RND) (TC 2.A.6) family. MmpL subfamily.

Its subcellular location is the cell membrane. The chain is Probable transport protein MmpL8 (mmpL8) from Mycobacterium bovis (strain ATCC BAA-935 / AF2122/97).